Consider the following 91-residue polypeptide: Small ribosomal subunit protein uS19 (91 aa).

The protein belongs to the universal ribosomal protein uS19 family.

Functionally, protein S19 forms a complex with S13 that binds strongly to the 16S ribosomal RNA. This Psychrobacter arcticus (strain DSM 17307 / VKM B-2377 / 273-4) protein is Small ribosomal subunit protein uS19.